The sequence spans 556 residues: 2-succinyl-5-enolpyruvyl-6-hydroxy-3-cyclohexene-1-carboxylate synthase (556 aa).

Belongs to the TPP enzyme family. MenD subfamily. As to quaternary structure, homodimer. Mg(2+) is required as a cofactor. It depends on Mn(2+) as a cofactor. Requires thiamine diphosphate as cofactor.

It carries out the reaction isochorismate + 2-oxoglutarate + H(+) = 5-enolpyruvoyl-6-hydroxy-2-succinyl-cyclohex-3-ene-1-carboxylate + CO2. It participates in quinol/quinone metabolism; 1,4-dihydroxy-2-naphthoate biosynthesis; 1,4-dihydroxy-2-naphthoate from chorismate: step 2/7. Its pathway is quinol/quinone metabolism; menaquinone biosynthesis. Its function is as follows. Catalyzes the thiamine diphosphate-dependent decarboxylation of 2-oxoglutarate and the subsequent addition of the resulting succinic semialdehyde-thiamine pyrophosphate anion to isochorismate to yield 2-succinyl-5-enolpyruvyl-6-hydroxy-3-cyclohexene-1-carboxylate (SEPHCHC). This Shigella boydii serotype 18 (strain CDC 3083-94 / BS512) protein is 2-succinyl-5-enolpyruvyl-6-hydroxy-3-cyclohexene-1-carboxylate synthase.